The chain runs to 293 residues: Mating-type protein A-1 (293 aa).

The segment at residues 42 to 97 is a DNA-binding region (alpha box); it reads AAKKKVNGFMGFRSYYSPLFSQLPQKERSPFMTILWQHDPFHNEWDFMCSVYSSIR.

This sequence belongs to the MATALPHA1 family.

Its subcellular location is the nucleus. Mating type proteins are sequence specific DNA-binding proteins that act as master switches in yeast differentiation by controlling gene expression in a cell type-specific fashion. Transcriptional activator that induces the transcription of A-specific genes like mating factor ccg-4. Required for mating as an A-cell and for blocking of heterokaryon formation (vegetative incompatibility). The protein is Mating-type protein A-1 (mtA-1) of Neurospora crassa (strain ATCC 24698 / 74-OR23-1A / CBS 708.71 / DSM 1257 / FGSC 987).